Consider the following 127-residue polypeptide: Large ribosomal subunit protein bL12 (127 aa).

Positions 96–127 (GTPSTLKEAVSKDDAEEAAKQLKEAGAEVEVK) are disordered. Positions 104–127 (AVSKDDAEEAAKQLKEAGAEVEVK) are enriched in basic and acidic residues.

This sequence belongs to the bacterial ribosomal protein bL12 family. Homodimer. Part of the ribosomal stalk of the 50S ribosomal subunit. Forms a multimeric L10(L12)X complex, where L10 forms an elongated spine to which 2 to 4 L12 dimers bind in a sequential fashion. Binds GTP-bound translation factors.

Forms part of the ribosomal stalk which helps the ribosome interact with GTP-bound translation factors. Is thus essential for accurate translation. This chain is Large ribosomal subunit protein bL12, found in Oleidesulfovibrio alaskensis (strain ATCC BAA-1058 / DSM 17464 / G20) (Desulfovibrio alaskensis).